A 559-amino-acid chain; its full sequence is Actin-binding protein WASF1 (559 aa).

Disordered stretches follow at residues 169–202 (TEDK…DRRR), 307–400 (RPQS…SPPV), and 412–492 (VHPL…STLP). Positions 182 to 202 (KNLDRPHEPEKVPRAPHDRRR) are enriched in basic and acidic residues. Residues 322-332 (PTPPPPPPPLP) show a composition bias toward pro residues. The span at 333–346 (SALSTSSLRASMTS) shows a compositional bias: low complexity. Arg341 is subject to Asymmetric dimethylarginine; alternate. Arg341 carries the post-translational modification Omega-N-methylarginine; alternate. Composition is skewed to pro residues over residues 347–374 (TPPP…PPAP), 384–399 (PAPP…PSPP), 423–437 (LPPP…PPGI), and 458–477 (TPSP…PPSQ). Position 489 is a phosphoserine (Ser489). In terms of domain architecture, WH2 spans 497–514 (ARSVLLEAIRKGIQLRKV).

It belongs to the SCAR/WAVE family. Component of the WAVE1 complex composed of ABI2, CYFIP1 or CYFIP2, BRK1, NCKAP1 and WASF1/WAVE1. Within the complex, a heterodimer containing NCKAP1 and CYFIP1 interacts with a heterotrimer formed by WAVE1, ABI2 and BRK1. CYFIP2 binds to activated RAC1 which causes the complex to dissociate, releasing activated WASF1. The complex can also be activated by NCK1. Binds actin and the Arp2/3 complex. Interacts with BAIAP2. Interacts with SHANK3; the interaction mediates the association of SHANK3 with the WAVE1 complex. Interacts with ABI1 (via N-terminus). Interacts with SORBS2; this interaction greatly enhances phosphorylation by ABL1 and dephosphorylation by PTPN12 and might mediate partial to focal adhesion sites. In terms of tissue distribution, expressed in hippocampal neurons (at protein level).

Its subcellular location is the cytoplasm. The protein resides in the cytoskeleton. The protein localises to the synapse. It localises to the cell junction. It is found in the focal adhesion. Its function is as follows. Downstream effector molecule involved in the transmission of signals from tyrosine kinase receptors and small GTPases to the actin cytoskeleton. Promotes formation of actin filaments. Part of the WAVE complex that regulates lamellipodia formation. The WAVE complex regulates actin filament reorganization via its interaction with the Arp2/3 complex. As component of the WAVE1 complex, required for BDNF-NTRK2 endocytic trafficking and signaling from early endosomes. Also involved in the regulation of mitochondrial dynamics. The polypeptide is Actin-binding protein WASF1 (Wasf1) (Rattus norvegicus (Rat)).